Consider the following 166-residue polypeptide: Putative protein PTGES3L (166 aa).

Residues 46-154 enclose the CS domain; sequence RQHARTLWYD…RPPPAMDDLD (109 aa). Residues 142–166 are disordered; sequence STKRPPPAMDDLDDDSDSADDATSN. A compositionally biased stretch (acidic residues) spans 151–166; it reads DDLDDDSDSADDATSN.

Belongs to the p23/wos2 family.

The sequence is that of Putative protein PTGES3L from Homo sapiens (Human).